The sequence spans 155 residues: Small ribosomal subunit protein uS7c (155 aa).

This sequence belongs to the universal ribosomal protein uS7 family. As to quaternary structure, part of the 30S ribosomal subunit.

It is found in the plastid. The protein localises to the chloroplast. Its function is as follows. One of the primary rRNA binding proteins, it binds directly to 16S rRNA where it nucleates assembly of the head domain of the 30S subunit. This is Small ribosomal subunit protein uS7c (rps7) from Gunnera chilensis (Chilean rhubarb).